The chain runs to 216 residues: Adenylate kinase (216 aa).

10–15 (GAGKGT) contributes to the ATP binding site. The tract at residues 30–59 (STGDMFRAAMKAETEMGLQAKSFIDKGALV) is NMP. AMP is bound by residues T31, R36, 57-59 (ALV), 85-88 (GFPR), and Q92. The LID stretch occupies residues 126–163 (GRRICKECGATYHLEFNPPAKADVCDKCGGELYQRSDD). R127 contacts ATP. The Zn(2+) site is built by C130 and C133. 136–137 (TY) contacts ATP. Residues C150 and C153 each contribute to the Zn(2+) site. AMP-binding residues include R160 and R171. Residue Q199 participates in ATP binding.

This sequence belongs to the adenylate kinase family. In terms of assembly, monomer.

Its subcellular location is the cytoplasm. It carries out the reaction AMP + ATP = 2 ADP. It participates in purine metabolism; AMP biosynthesis via salvage pathway; AMP from ADP: step 1/1. Functionally, catalyzes the reversible transfer of the terminal phosphate group between ATP and AMP. Plays an important role in cellular energy homeostasis and in adenine nucleotide metabolism. This chain is Adenylate kinase, found in Bacillus cereus (strain G9842).